An 829-amino-acid chain; its full sequence is Periplasmic nitrate reductase (829 aa).

The segment at residues Met1–Ala30 is a signal peptide (tat-type signal). A 4Fe-4S Mo/W bis-MGD-type domain is found at Ile41–Asp97. [4Fe-4S] cluster is bound by residues Cys48, Cys51, Cys55, and Cys83. Mo-bis(molybdopterin guanine dinucleotide) is bound by residues Lys85, Gln152, Asn177, Cys181, Trp214 to Met221, Ser245 to His249, Gln264 to Asp266, Met374, Gln378, Asn484, Ser510 to Asp511, Lys533, Asp560, and Thr718 to Thr727. Phe794 is a binding site for substrate. Mo-bis(molybdopterin guanine dinucleotide)-binding residues include Asn802 and Lys819.

This sequence belongs to the prokaryotic molybdopterin-containing oxidoreductase family. NasA/NapA/NarB subfamily. In terms of assembly, component of the periplasmic nitrate reductase NapAB complex composed of NapA and NapB. [4Fe-4S] cluster is required as a cofactor. The cofactor is Mo-bis(molybdopterin guanine dinucleotide). Predicted to be exported by the Tat system. The position of the signal peptide cleavage has not been experimentally proven.

It localises to the periplasm. It catalyses the reaction 2 Fe(II)-[cytochrome] + nitrate + 2 H(+) = 2 Fe(III)-[cytochrome] + nitrite + H2O. Functionally, catalytic subunit of the periplasmic nitrate reductase complex NapAB. Receives electrons from NapB and catalyzes the reduction of nitrate to nitrite. In Vibrio vulnificus (strain YJ016), this protein is Periplasmic nitrate reductase.